Reading from the N-terminus, the 500-residue chain is Na(+)/H(+) antiporter NhaB (500 aa).

The next 13 membrane-spanning stretches (helical) occupy residues histidine 11 to leucine 31, leucine 34 to phenylalanine 54, methionine 58 to leucine 78, valine 96 to phenylalanine 116, isoleucine 121 to phenylalanine 141, phenylalanine 145 to valine 165, leucine 205 to proline 225, phenylalanine 241 to valine 261, isoleucine 311 to isoleucine 331, phenylalanine 350 to isoleucine 370, methionine 394 to isoleucine 414, alanine 450 to isoleucine 470, and methionine 477 to threonine 497.

This sequence belongs to the NhaB Na(+)/H(+) (TC 2.A.34) antiporter family.

The protein localises to the cell inner membrane. It carries out the reaction 2 Na(+)(in) + 3 H(+)(out) = 2 Na(+)(out) + 3 H(+)(in). Na(+)/H(+) antiporter that extrudes sodium in exchange for external protons. The chain is Na(+)/H(+) antiporter NhaB from Pseudomonas putida (strain ATCC 700007 / DSM 6899 / JCM 31910 / BCRC 17059 / LMG 24140 / F1).